The sequence spans 489 residues: Serine/threonine-protein kinase BSK2 (489 aa).

Residues 1–30 are disordered; sequence MGCLHSKTANLPSSDDPSAPNKPESVNGDQ. Gly2 carries the N-myristoyl glycine lipid modification. Positions 7-16 are enriched in polar residues; the sequence is KTANLPSSDD. In terms of domain architecture, Protein kinase spans 56–322; it reads SCIVSEGGEK…QEEVASHVLM (267 aa). ATP-binding positions include 62–70 and Lys84; that span reads GGEKAPNVV. The Proton acceptor role is filled by Asp178.

Belongs to the protein kinase superfamily. Ser/Thr protein kinase family. Phosphorylated by BRI1 upon brassinolide (BL) treatment.

It is found in the cell membrane. It catalyses the reaction L-seryl-[protein] + ATP = O-phospho-L-seryl-[protein] + ADP + H(+). The enzyme catalyses L-threonyl-[protein] + ATP = O-phospho-L-threonyl-[protein] + ADP + H(+). Its function is as follows. Probable serine/threonine kinase that acts as a positive regulator of brassinosteroid (BR) signaling downstream of the receptor kinase BRI1. Mediates signal transduction from BRI1 by functioning as substrate of BRI1. The protein is Serine/threonine-protein kinase BSK2 of Arabidopsis thaliana (Mouse-ear cress).